The following is a 340-amino-acid chain: NADH-quinone oxidoreductase subunit H (340 aa).

The next 9 membrane-spanning stretches (helical) occupy residues 3-23, 69-89, 102-122, 127-147, 154-174, 186-206, 248-268, 274-294, and 312-332; these read LVGM…LVYM, WAFF…WAVI, VVVM…VLAI, VYGI…LGAI, ISYE…AGSL, MPYW…VSML, ILVS…PLNI, IPGF…FIWV, and KVFL…LLWV.

It belongs to the complex I subunit 1 family. In terms of assembly, NDH-1 is composed of 14 different subunits. Subunits NuoA, H, J, K, L, M, N constitute the membrane sector of the complex.

Its subcellular location is the cell inner membrane. The catalysed reaction is a quinone + NADH + 5 H(+)(in) = a quinol + NAD(+) + 4 H(+)(out). Functionally, NDH-1 shuttles electrons from NADH, via FMN and iron-sulfur (Fe-S) centers, to quinones in the respiratory chain. The immediate electron acceptor for the enzyme in this species is believed to be ubiquinone. Couples the redox reaction to proton translocation (for every two electrons transferred, four hydrogen ions are translocated across the cytoplasmic membrane), and thus conserves the redox energy in a proton gradient. This subunit may bind ubiquinone. The sequence is that of NADH-quinone oxidoreductase subunit H from Anaplasma phagocytophilum (strain HZ).